A 421-amino-acid polypeptide reads, in one-letter code: 5-hydroxytryptamine receptor 1A (421 aa).

The Extracellular portion of the chain corresponds to 1-38 (MDMFSLGQGNNTTTSLEPFGTGGNDTGLSNVTFSYQVI). N-linked (GlcNAc...) asparagine glycans are attached at residues Asn10, Asn11, Asn24, and Asn30. The chain crosses the membrane as a helical span at residues 39–59 (TSLLLGTLIFCAVLGNACVVA). Over 60-73 (AIALERSLQNVANY) the chain is Cytoplasmic. Residues 74–98 (LIGSLAVTDLMVSVLVLPMAALYQV) form a helical membrane-spanning segment. The Extracellular segment spans residues 99–107 (LNKWTLGQV). Residues 108–132 (TCDLFIALDVLCCTSSILHLCAIAL) form a helical membrane-spanning segment. Cysteines 109 and 187 form a disulfide. Residues Asp116 and Cys120 each contribute to the serotonin site. Residues 133–135 (DRY) carry the DRY motif; important for ligand-induced conformation changes motif. At 133-152 (DRYWAITDPIDYVNKRTPRR) the chain is on the cytoplasmic side. A helical transmembrane segment spans residues 153–174 (AAALISLTWLIGFLISIPPMLG). Over 175–193 (WRTPEDRSNPNECTISKDH) the chain is Extracellular. Residues 194-216 (GYTIYSTFGAFYIPLLLMLVLYG) traverse the membrane as a helical segment. The Cytoplasmic segment spans residues 217 to 346 (RIFRAARFRI…LARERKTVKT (130 aa)). The disordered stretch occupies residues 237–268 (GAGTSFGTSSAPPPKKSLNGQPGSGDCRRSAE). 1D-myo-inositol 4-phosphate contacts are provided by Thr314, Lys345, Thr346, and Gly352. Residues 347–370 (LGIIMGTFILCWLPFFIVALVLPF) traverse the membrane as a helical segment. Over 371 to 378 (CESSCHMP) the chain is Extracellular. The chain crosses the membrane as a helical span at residues 379-403 (ELLGAIINWLGYSNSLLNPVIYAYF). Positions 396–400 (NPVIY) match the NPxxY motif; important for ligand-induced conformation changes and signaling motif. Residues Phe403, Asn404, and Lys405 each contribute to the 1D-myo-inositol 4-phosphate site. The Cytoplasmic segment spans residues 404–421 (NKDFQNAFKKIIKCKFCR).

Belongs to the G-protein coupled receptor 1 family. 5-hydroxytryptamine receptor subfamily. HTR1A sub-subfamily. Heterodimer; heterodimerizes with GPER1. Interacts with YIF1B. Interacts with GPR39 and GALR1. Most abundantly expressed in midbrain, in dorsal raphe and hippocampus. Detected at lower levels in amygdala and brain cortex.

The protein localises to the cell membrane. It localises to the cell projection. Its subcellular location is the dendrite. Its activity is regulated as follows. G-protein coupled receptor activity is regulated by lipids: phosphatidylinositol 4-phosphate increases HTR1A-mediated activity. Plays a role in the regulation of dopamine and 5-hydroxytryptamine levels in the brain, and thereby affects neural activity, mood and behavior. Plays a role in the response to anxiogenic stimuli. Its function is as follows. G-protein coupled receptor for 5-hydroxytryptamine (serotonin). Also functions as a receptor for various drugs and psychoactive substances. Ligand binding causes a conformation change that triggers signaling via guanine nucleotide-binding proteins (G proteins) and modulates the activity of downstream effectors, such as adenylate cyclase. HTR1A is coupled to G(i)/G(o) G alpha proteins and mediates inhibitory neurotransmission: signaling inhibits adenylate cyclase activity and activates a phosphatidylinositol-calcium second messenger system that regulates the release of Ca(2+) ions from intracellular stores. Beta-arrestin family members regulate signaling by mediating both receptor desensitization and resensitization processes. In Mus musculus (Mouse), this protein is 5-hydroxytryptamine receptor 1A (Htr1a).